A 214-amino-acid polypeptide reads, in one-letter code: Alpha-S1-casein (214 aa).

The first 15 residues, 1-15 (MKLLILTCLVAVALA), serve as a signal peptide directing secretion. Ser-27 is subject to Phosphoserine; in allele A. Phosphoserine; in allele C is present on Ser-56. Ser-61 and Ser-63 each carry phosphoserine. The tract at residues 69–91 (MEDAKQMKAGSSSSSEEIVPNSA) is disordered. Phosphoserine; in alleles A and C is present on Ser-79. Phosphoserine is present on Ser-80. Ser-81 is subject to Phosphoserine; in alleles A and C. Ser-82 is subject to Phosphoserine. The residue at position 83 (Ser-83) is a Phosphoserine; in alleles A and C. Ser-90 is subject to Phosphoserine. The interval 105–111 (RYLGYLE) is opioid-like peptide sequence. Ser-130 carries the phosphoserine modification.

The protein belongs to the alpha-casein family. Mammary gland specific. Secreted in milk.

It localises to the secreted. Important role in the capacity of milk to transport calcium phosphate. The polypeptide is Alpha-S1-casein (CSN1S1) (Ovis aries (Sheep)).